Reading from the N-terminus, the 276-residue chain is NAD kinase (276 aa).

D61 (proton acceptor) is an active-site residue. NAD(+) contacts are provided by residues 61–62 (DG), R66, 135–136 (NE), R146, H163, D165, and A200.

This sequence belongs to the NAD kinase family. It depends on a divalent metal cation as a cofactor.

It localises to the cytoplasm. It carries out the reaction NAD(+) + ATP = ADP + NADP(+) + H(+). In terms of biological role, involved in the regulation of the intracellular balance of NAD and NADP, and is a key enzyme in the biosynthesis of NADP. Catalyzes specifically the phosphorylation on 2'-hydroxyl of the adenosine moiety of NAD to yield NADP. This chain is NAD kinase, found in Chloroflexus aggregans (strain MD-66 / DSM 9485).